Reading from the N-terminus, the 660-residue chain is Bifunctional polymyxin resistance protein ArnA (660 aa).

The interval 1–304 is formyltransferase ArnAFT; sequence MKAVIFAYHD…TLGLVAGARL (304 aa). Catalysis depends on histidine 104, which acts as the Proton donor; for formyltransferase activity. (6R)-10-formyltetrahydrofolate-binding positions include arginine 114 and 136–140; that span reads VKRAD. The dehydrogenase ArnADH stretch occupies residues 314-660; it reads RRIRVLILGV…RSVDIAERAS (347 aa). NAD(+) contacts are provided by residues aspartate 347 and 368-369; that span reads DI. Residues alanine 393, tyrosine 398, and 432–433 contribute to the UDP-alpha-D-glucuronate site; that span reads TS. Glutamate 434 serves as the catalytic Proton acceptor; for decarboxylase activity. Residues arginine 460, asparagine 492, 526-535, and tyrosine 613 each bind UDP-alpha-D-glucuronate; that span reads KLIDGGQQKR. Arginine 619 (proton donor; for decarboxylase activity) is an active-site residue.

In the N-terminal section; belongs to the Fmt family. UDP-L-Ara4N formyltransferase subfamily. The protein in the C-terminal section; belongs to the NAD(P)-dependent epimerase/dehydratase family. UDP-glucuronic acid decarboxylase subfamily. As to quaternary structure, homohexamer, formed by a dimer of trimers.

The catalysed reaction is UDP-alpha-D-glucuronate + NAD(+) = UDP-beta-L-threo-pentopyranos-4-ulose + CO2 + NADH. It catalyses the reaction UDP-4-amino-4-deoxy-beta-L-arabinose + (6R)-10-formyltetrahydrofolate = UDP-4-deoxy-4-formamido-beta-L-arabinose + (6S)-5,6,7,8-tetrahydrofolate + H(+). It participates in nucleotide-sugar biosynthesis; UDP-4-deoxy-4-formamido-beta-L-arabinose biosynthesis; UDP-4-deoxy-4-formamido-beta-L-arabinose from UDP-alpha-D-glucuronate: step 1/3. The protein operates within nucleotide-sugar biosynthesis; UDP-4-deoxy-4-formamido-beta-L-arabinose biosynthesis; UDP-4-deoxy-4-formamido-beta-L-arabinose from UDP-alpha-D-glucuronate: step 3/3. Its pathway is bacterial outer membrane biogenesis; lipopolysaccharide biosynthesis. In terms of biological role, bifunctional enzyme that catalyzes the oxidative decarboxylation of UDP-glucuronic acid (UDP-GlcUA) to UDP-4-keto-arabinose (UDP-Ara4O) and the addition of a formyl group to UDP-4-amino-4-deoxy-L-arabinose (UDP-L-Ara4N) to form UDP-L-4-formamido-arabinose (UDP-L-Ara4FN). The modified arabinose is attached to lipid A and is required for resistance to polymyxin and cationic antimicrobial peptides. This chain is Bifunctional polymyxin resistance protein ArnA (arnA), found in Salmonella typhimurium (strain LT2 / SGSC1412 / ATCC 700720).